The chain runs to 463 residues: Peptidylprolyl isomerase cyp7 (463 aa).

The 156-residue stretch at 11–166 (ATGTVILKTT…FPPKIISTEV (156 aa)) folds into the PPIase cyclophilin-type domain. The segment at 224–275 (VKKPLRQKTPVSRSSDTTTELSKDLISSSSSIHSTYSSAQTGLTSAKVSSDE) is disordered. The segment covering 232–243 (TPVSRSSDTTTE) has biased composition (polar residues). Low complexity predominate over residues 250–261 (SSSSSIHSTYSS). A compositionally biased stretch (polar residues) spans 262 to 271 (AQTGLTSAKV).

The protein belongs to the cyclophilin-type PPIase family. CWC27 subfamily. As to quaternary structure, belongs to the 40S cdc5-associated complex (or cwf complex), a spliceosome sub-complex reminiscent of a late-stage spliceosome composed of the U2, U5 and U6 snRNAs and at least brr2, cdc5, cwf2/prp3, cwf3/syf1, cwf4/syf3, cwf5/ecm2, spp42/cwf6, cwf7/spf27, cwf8, cwf9, cwf10, cwf11, cwf12, prp45/cwf13, cwf14, cwf15, cwf16, cwf17, cwf18, cwf19, cwf20, cwf21, cwf22, cwf23, cwf24, cwf25, cwf26, cyp7/cwf27, cwf28, cwf29/ist3, lea1, msl1, prp5/cwf1, prp10, prp12/sap130, prp17, prp22, sap61, sap62, sap114, sap145, slu7, smb1, smd1, smd3, smf1, smg1 and syf2.

The protein localises to the cytoplasm. It is found in the nucleus. The catalysed reaction is [protein]-peptidylproline (omega=180) = [protein]-peptidylproline (omega=0). Functionally, PPIases accelerate the folding of proteins. Catalyzes the cis-trans isomerization of proline imidic peptide bonds in oligopeptides. Involved in pre-mRNA splicing. The sequence is that of Peptidylprolyl isomerase cyp7 (cyp7) from Schizosaccharomyces pombe (strain 972 / ATCC 24843) (Fission yeast).